Consider the following 257-residue polypeptide: MLTFALTIVRHGETQYNRDKLLQGQGIDTPLSDTGHQQAAAAGRYLKDLHFTNVFVSNLQRAIQTAEIILGNNLHSSATEMILDPLLRERGFGVAEGRPKEHLKNMANAAGQSCRDYTPPGGETLEQVKTRFKMFLKSLFQRMLEEHGSALSSAPSEADQPVIAGLADDGAQNVPVHALMVSHGAFIRISVRHLVEDLQCCLPAGLKMNQVFSPCPNTGISRFIFTIHREESVLRATRIQGVFINRKDHLEEVKNSD.

Residue histidine 11 is the Tele-phosphohistidine intermediate of the active site. Catalysis depends on glutamate 89, which acts as the Proton donor/acceptor.

It belongs to the phosphoglycerate mutase family.

Its subcellular location is the cytoplasm. It localises to the nucleus. It is found in the mitochondrion. It carries out the reaction beta-D-fructose 2,6-bisphosphate + H2O = beta-D-fructose 6-phosphate + phosphate. Functionally, fructose-bisphosphatase hydrolyzing fructose-2,6-bisphosphate as well as fructose-1,6-bisphosphate. Acts as a negative regulator of glycolysis by lowering intracellular levels of fructose-2,6-bisphosphate in a p53/TP53-dependent manner, resulting in the pentose phosphate pathway (PPP) activation and NADPH production. Contributes to the generation of reduced glutathione to cause a decrease in intracellular reactive oxygen species (ROS) content, correlating with its ability to protect cells from oxidative or metabolic stress-induced cell death. May play a role in mitophagy inhibition. The polypeptide is Fructose-2,6-bisphosphatase TIGAR B (Danio rerio (Zebrafish)).